A 398-amino-acid polypeptide reads, in one-letter code: MKPLFVLLLLLLLLDLAQAQGVLHRVPLRRHQSLRKKLRAQGQLSDFWRSHNLDMIEFSESCNVDKGINEPLINYLDMEYFGTVSIGSPSQNFTVIFDTGSSNLWVPSVYCTSPACKAHPVFHPSQSSTYMEVGNHFSIQYGTGSLTGIIGADQVSVEGLTVEGQQFGESVKEPGQTFVNAEFDGILGLGYPSLAVGGVTPVFDNMMAQNLVALPMFSVYLSSDPQGGSGSELTFGGYDPSHFSGSLNWIPVTKQGYWQIALDGIQVGDTVMFCSEGCQAIVDTGTSLITGPPKKIKQLQEAIGATPMDGEYAVDCATLNMMPNVTFLINGVSYTLSPTAYILPDLVDGMQFCGSGFQGLDIQPPAGPLWILGDVFIRKFYSVFDRGNNQVGLAPAVP.

The N-terminal stretch at 1-21 (MKPLFVLLLLLLLLDLAQAQG) is a signal peptide. Positions 22–58 (VLHRVPLRRHQSLRKKLRAQGQLSDFWRSHNLDMIEF) are cleaved as a propeptide — activation peptide. Positions 80-394 (YFGTVSIGSP…DRGNNQVGLA (315 aa)) constitute a Peptidase A1 domain. N-linked (GlcNAc...) asparagine glycosylation occurs at Asn92. Residue Asp98 is part of the active site. 2 disulfides stabilise this stretch: Cys111-Cys116 and Cys274-Cys278. Residue Asp283 is part of the active site.

The protein belongs to the peptidase A1 family. As to quaternary structure, homodimer; disulfide-linked. In terms of processing, glycosylated. The nature of the carbohydrate chain varies between cell types. In brain microglia, the proenzyme contains a high mannose-type oligosaccharide, while the mature enzyme contains a complex-type oligosaccharide. In stomach and spleen, the mature enzyme contains a high mannose-type oligosaccharide. In erythrocyte membranes, the mature enzyme contains a complex-type oligosaccharide. In terms of tissue distribution, expressed abundantly in lymphocytes and macrophages of the thymus and spleen, and in the M cells of the intestine. In the brain, expression is limited to reactive microglial cells, the large pyrimidial neurons in the cerebral cortex, the CA1 and CA3 pyrimidial neurons of the hippocampus, the large neurons of the neostriatum, and the Purkinje neurons of the cerebellum.

The protein resides in the endosome. It carries out the reaction Similar to cathepsin D, but slightly broader specificity.. Its function is as follows. May have a role in immune function. Probably involved in the processing of antigenic peptides during MHC class II-mediated antigen presentation. May play a role in activation-induced lymphocyte depletion in the thymus, and in neuronal degeneration and glial cell activation in the brain. This is Cathepsin E (Ctse) from Rattus norvegicus (Rat).